The primary structure comprises 356 residues: tRNA N6-adenosine threonylcarbamoyltransferase (356 aa).

Fe cation-binding residues include histidine 115 and histidine 119. Residues 138–142 (LVSGG), aspartate 171, glycine 184, and asparagine 283 contribute to the substrate site. Aspartate 311 is a binding site for Fe cation.

Belongs to the KAE1 / TsaD family. It depends on Fe(2+) as a cofactor.

The protein resides in the cytoplasm. The catalysed reaction is L-threonylcarbamoyladenylate + adenosine(37) in tRNA = N(6)-L-threonylcarbamoyladenosine(37) in tRNA + AMP + H(+). Functionally, required for the formation of a threonylcarbamoyl group on adenosine at position 37 (t(6)A37) in tRNAs that read codons beginning with adenine. Is involved in the transfer of the threonylcarbamoyl moiety of threonylcarbamoyl-AMP (TC-AMP) to the N6 group of A37, together with TsaE and TsaB. TsaD likely plays a direct catalytic role in this reaction. The polypeptide is tRNA N6-adenosine threonylcarbamoyltransferase (Prochlorococcus marinus (strain MIT 9303)).